Reading from the N-terminus, the 257-residue chain is Dihydroorotate dehydrogenase B (NAD(+)), electron transfer subunit (257 aa).

Residues 2-102 enclose the FAD-binding FR-type domain; sequence MKQEQMTVVR…LGPLGNGFPL (101 aa). FAD is bound by residues 53–56, 70–72, and 77–78; these read RPLS, IYR, and GT. [2Fe-2S] cluster-binding residues include C221, C226, C229, and C244.

It belongs to the PyrK family. As to quaternary structure, heterotetramer of 2 PyrK and 2 PyrD type B subunits. [2Fe-2S] cluster serves as cofactor. It depends on FAD as a cofactor.

It functions in the pathway pyrimidine metabolism; UMP biosynthesis via de novo pathway; orotate from (S)-dihydroorotate (NAD(+) route): step 1/1. Functionally, responsible for channeling the electrons from the oxidation of dihydroorotate from the FMN redox center in the PyrD type B subunit to the ultimate electron acceptor NAD(+). In Geobacillus sp. (strain WCH70), this protein is Dihydroorotate dehydrogenase B (NAD(+)), electron transfer subunit.